A 348-amino-acid polypeptide reads, in one-letter code: Dihydroorotase (348 aa).

Residues His-17 and His-19 each contribute to the Zn(2+) site. Substrate is bound by residues 19-21 (HLR) and Asn-45. Zn(2+)-binding residues include Lys-103, His-140, and His-178. An N6-carboxylysine modification is found at Lys-103. His-140 provides a ligand contact to substrate. Residue Leu-223 coordinates substrate. Position 251 (Asp-251) interacts with Zn(2+). Asp-251 is an active-site residue. The substrate site is built by His-255 and Ala-267.

It belongs to the metallo-dependent hydrolases superfamily. DHOase family. Class II DHOase subfamily. Homodimer. The cofactor is Zn(2+).

It carries out the reaction (S)-dihydroorotate + H2O = N-carbamoyl-L-aspartate + H(+). It functions in the pathway pyrimidine metabolism; UMP biosynthesis via de novo pathway; (S)-dihydroorotate from bicarbonate: step 3/3. Catalyzes the reversible cyclization of carbamoyl aspartate to dihydroorotate. The protein is Dihydroorotase of Salmonella paratyphi B (strain ATCC BAA-1250 / SPB7).